The sequence spans 420 residues: Ketoreductase sphF (420 aa).

Residues 1–21 are disordered; that stretch reads MLERPSFPRLGAGTRHHRPLG. A helical membrane pass occupies residues 29 to 49; sequence WLLAFTGISGIAGMMIPYVPW. Residues 275–298 are disordered; that stretch reads RQKRSPSPGRHPALGSPPAQLRQD.

It localises to the membrane. The enzyme catalyses 3-oxopresphingofungin + NADPH + 2 H(+) = presphingofungin + NADP(+). Its pathway is secondary metabolite biosynthesis. Its function is as follows. Ketoreductase; part of the gene cluster that mediates the biosynthesis of sphingofungins, bioactive molecules acting as sphingolipid inhibitors via inhibiting serine palmitoyl transferase (SPT). Within the pathway, sphF catalyzes the reduction of the C-3 ketone of 3-keto-presphingofungin to produce presphingofungin. Sphingofungin biosynthesis starts with the PKS sphB that produces an C18 polyketide precursor 3-hydroxyoctadeca-4,10-dienoyl-ACP containing one delta-6 desaturation and one delta-12 desaturation. The aminoacyl transferase sphA uses the sphB product to produce 3-keto-presphingofungin by adding an aminomalonate molecule. SphF then reduces the C-3 ketone of 3-keto-presphingofungin which leads to presphingofungin. The cytochrome P450 monooxygenase sphH converts presphingofungin into sphingofungin B1 which is further converted to sphingofungin B by the dioxygenase sphC. SphC is also able to convert presphingofungin into sphingofungin B2. The acetyltransferase sphE acetylates sphingofungin B to produce sphingofungin C, but can also convert sphingofungin B1 into sphingofungin C1 and sphingofungin B2 into sphingofungin C2. Finally, sphingofungin C can be spontaneously converted into sphingofungin D. This is Ketoreductase sphF from Aspergillus fumigatus (strain CBS 144.89 / FGSC A1163 / CEA10) (Neosartorya fumigata).